The following is a 406-amino-acid chain: Argininosuccinate synthase (406 aa).

ATP is bound by residues 12 to 20 (AYSGGLDTS) and Ala-40. Tyr-92 and Ser-97 together coordinate L-citrulline. Residue Gly-122 coordinates ATP. Residues Thr-124, Asn-128, and Asp-129 each coordinate L-aspartate. Asn-128 provides a ligand contact to L-citrulline. Arg-132, Ser-181, Ser-190, Glu-266, and Tyr-278 together coordinate L-citrulline.

It belongs to the argininosuccinate synthase family. Type 1 subfamily. Homotetramer.

It is found in the cytoplasm. It catalyses the reaction L-citrulline + L-aspartate + ATP = 2-(N(omega)-L-arginino)succinate + AMP + diphosphate + H(+). It functions in the pathway amino-acid biosynthesis; L-arginine biosynthesis; L-arginine from L-ornithine and carbamoyl phosphate: step 2/3. The sequence is that of Argininosuccinate synthase from Serratia proteamaculans (strain 568).